A 631-amino-acid chain; its full sequence is Pescadillo homolog (631 aa).

The BRCT domain occupies 321-414; sequence RLRTLFKGLK…QLLPTNDYFL (94 aa). Residues 428–442 are compositionally biased toward basic and acidic residues; that stretch reads SKRDSYIPPEEKALH. Disordered stretches follow at residues 428–471 and 489–560; these read SKRD…EADQ and YKKY…EVDE. A phosphoserine mark is found at Ser453 and Ser457. Acidic residues-rich tracts occupy residues 453-471 and 498-525; these read SEEE…EADQ and VNED…EDVD. A compositionally biased stretch (basic and acidic residues) spans 526 to 538; that stretch reads EQTKRKQQEKEKM. Residues 544–553 show a composition bias toward basic residues; the sequence is KVHKVNKRQV. Residues 593 to 629 are a coiled coil; it reads LRKKRRNIDADTKEAKKAAKREARKLAAEAAARAAKL.

Belongs to the pescadillo family.

Its subcellular location is the nucleus. The protein localises to the nucleolus. It localises to the nucleoplasm. Its function is as follows. Required for maturation of ribosomal RNAs and formation of the large ribosomal subunit. The polypeptide is Pescadillo homolog (Drosophila persimilis (Fruit fly)).